The primary structure comprises 198 residues: MSTSRTAEITRNTNETQIRVAINIDGTGQQKLNTGVPFLDHMLDQIARHGLIDLDIEAKGDLHIDAHHTVEDVGITLGQAFAKAIGDKKGIRRYGHSYVPLDEALSRVVIDFSGRPGLEFHVPFTRSMIGAFDVDLTREFFQGFVNHALVSMHIDNLRGANAHHQCETVFKAFGRALRMAIELDPRSAGTIPSTKGSL.

It belongs to the imidazoleglycerol-phosphate dehydratase family.

Its subcellular location is the cytoplasm. It catalyses the reaction D-erythro-1-(imidazol-4-yl)glycerol 3-phosphate = 3-(imidazol-4-yl)-2-oxopropyl phosphate + H2O. Its pathway is amino-acid biosynthesis; L-histidine biosynthesis; L-histidine from 5-phospho-alpha-D-ribose 1-diphosphate: step 6/9. In Herminiimonas arsenicoxydans, this protein is Imidazoleglycerol-phosphate dehydratase.